Reading from the N-terminus, the 560-residue chain is Involucrin (560 aa).

The segment covering 1–15 (MSQQHTLPVTLSPAL) has biased composition (polar residues). 3 disordered regions span residues 1 to 131 (MSQQ…KLLD), 150 to 359 (EQLL…LVQQ), and 404 to 534 (GQLK…QSAL). The span at 76 to 91 (EQQQQEPQEQELQQQH) shows a compositional bias: low complexity. Composition is skewed to basic and acidic residues over residues 92–115 (WEQHEEYQKAENPEQQLKQEKAQR) and 159–172 (QEGHLKHLEQREGQ). Residues 189 to 211 (QKGQLELPEQQEGQLELPEQQEG) are compositionally biased toward low complexity. Composition is skewed to basic and acidic residues over residues 212–231 (QLKHLEQQEGQLKHLEHQEG), 252–264 (QLKHLDQQEKQPE), and 274–320 (KHLE…EHQE). A compositionally biased stretch (low complexity) spans 321–334 (GQLGLPEQQVQQLK). Basic and acidic residues-rich tracts occupy residues 335–353 (QLEKEEGQPKHLEEEEGQL), 404–420 (GQLKHLEEQEGQLKHLE), 454–463 (QLKHLEKQEA), 476–486 (KHLEQQEKQLE), and 494–510 (QLKHLEQQEGQLKDLEQ).

The protein belongs to the involucrin family. Directly or indirectly cross-linked to cornifelin (CNFN). In terms of processing, substrate of transglutaminase. Specific glutamines or lysines are cross-linked to keratins, desmoplakin and to inter involucrin molecules. As to expression, keratinocytes of epidermis and other stratified squamous epithelia.

It is found in the cytoplasm. In terms of biological role, part of the insoluble cornified cell envelope (CE) of stratified squamous epithelia. The polypeptide is Involucrin (IVL) (Pan paniscus (Pygmy chimpanzee)).